The primary structure comprises 383 residues: Acetylornithine deacetylase (383 aa).

Position 80 (H80) interacts with Zn(2+). D82 is an active-site residue. Position 112 (D112) interacts with Zn(2+). The active site involves E144. Zn(2+) contacts are provided by E145, E169, and H355.

The protein belongs to the peptidase M20A family. ArgE subfamily. Homodimer. The cofactor is Zn(2+). Co(2+) is required as a cofactor. Glutathione serves as cofactor.

It is found in the cytoplasm. It carries out the reaction N(2)-acetyl-L-ornithine + H2O = L-ornithine + acetate. It participates in amino-acid biosynthesis; L-arginine biosynthesis; L-ornithine from N(2)-acetyl-L-ornithine (linear): step 1/1. In terms of biological role, catalyzes the hydrolysis of the amide bond of N(2)-acetylated L-amino acids. Cleaves the acetyl group from N-acetyl-L-ornithine to form L-ornithine, an intermediate in L-arginine biosynthesis pathway, and a branchpoint in the synthesis of polyamines. In Escherichia coli O7:K1 (strain IAI39 / ExPEC), this protein is Acetylornithine deacetylase.